A 196-amino-acid polypeptide reads, in one-letter code: Carnitine operon protein CaiE (196 aa).

The interval Q174–R196 is disordered. The span at Q187 to R196 shows a compositional bias: polar residues.

Belongs to the transferase hexapeptide repeat family.

The protein operates within amine and polyamine metabolism; carnitine metabolism. Functionally, overproduction of CaiE stimulates the activity of CaiB and CaiD. The chain is Carnitine operon protein CaiE (caiE) from Escherichia coli (strain K12).